Reading from the N-terminus, the 338-residue chain is Flap endonuclease 1 (338 aa).

Residues 1–98 (MGTDIGDLLL…DTLAKRHEVR (98 aa)) are N-domain. Mg(2+) contacts are provided by Asp-27, Asp-80, Glu-152, Glu-154, Asp-173, Asp-175, and Asp-236. An I-domain region spans residues 116-257 (EAYKYAQASS…RALKLVKEHG (142 aa)). Residues 330–338 (SQSTLDQWF) form an interaction with PCNA region.

Belongs to the XPG/RAD2 endonuclease family. FEN1 subfamily. As to quaternary structure, interacts with PCNA. PCNA stimulates the nuclease activity without altering cleavage specificity. It depends on Mg(2+) as a cofactor.

In terms of biological role, structure-specific nuclease with 5'-flap endonuclease and 5'-3' exonuclease activities involved in DNA replication and repair. During DNA replication, cleaves the 5'-overhanging flap structure that is generated by displacement synthesis when DNA polymerase encounters the 5'-end of a downstream Okazaki fragment. Binds the unpaired 3'-DNA end and kinks the DNA to facilitate 5' cleavage specificity. Cleaves one nucleotide into the double-stranded DNA from the junction in flap DNA, leaving a nick for ligation. Also involved in the base excision repair (BER) pathway. Acts as a genome stabilization factor that prevents flaps from equilibrating into structures that lead to duplications and deletions. Also possesses 5'-3' exonuclease activity on nicked or gapped double-stranded DNA. This is Flap endonuclease 1 from Methanococcoides burtonii (strain DSM 6242 / NBRC 107633 / OCM 468 / ACE-M).